Consider the following 538-residue polypeptide: Methionine--tRNA ligase (538 aa).

The 'HIGH' region motif lies at 21–31 (YYVNDAPHLGH). The Zn(2+) site is built by Cys137, Cys140, Cys162, and His165. A 'KMSKS' region motif is present at residues 313–317 (KMSKS). Lys316 lines the ATP pocket.

This sequence belongs to the class-I aminoacyl-tRNA synthetase family. MetG type 2A subfamily. In terms of assembly, monomer. The cofactor is Zn(2+).

The protein resides in the cytoplasm. It carries out the reaction tRNA(Met) + L-methionine + ATP = L-methionyl-tRNA(Met) + AMP + diphosphate. In terms of biological role, is required not only for elongation of protein synthesis but also for the initiation of all mRNA translation through initiator tRNA(fMet) aminoacylation. The sequence is that of Methionine--tRNA ligase from Streptomyces coelicolor (strain ATCC BAA-471 / A3(2) / M145).